The sequence spans 309 residues: UDP-N-acetylenolpyruvoylglucosamine reductase (309 aa).

The region spanning 25–188 is the FAD-binding PCMH-type domain; sequence RVGGPADWLF…TSVTLQGNRE (164 aa). Residue R168 is part of the active site. Positions 202 to 231 are disordered; that stretch reads AKRDATQPTKALTAGSTFRNPAGFSSTGQA. A compositionally biased stretch (polar residues) spans 207 to 231; the sequence is TQPTKALTAGSTFRNPAGFSSTGQA. The active-site Proton donor is S217. The active site involves E299.

This sequence belongs to the MurB family. FAD serves as cofactor.

The protein localises to the cytoplasm. It carries out the reaction UDP-N-acetyl-alpha-D-muramate + NADP(+) = UDP-N-acetyl-3-O-(1-carboxyvinyl)-alpha-D-glucosamine + NADPH + H(+). Its pathway is cell wall biogenesis; peptidoglycan biosynthesis. Cell wall formation. This is UDP-N-acetylenolpyruvoylglucosamine reductase from Jannaschia sp. (strain CCS1).